A 307-amino-acid chain; its full sequence is MSSRELIILGCSSQQPTRTRNQGAYLFRWNGEGLLFDPGEGTQRQFIFANIAPTTVNRIFVSHFHGDHCLGLGSMLMRLNLDKVSHPIHCYYPASGKKYFDRLRYGTIYHETIQVVEHPISEEGIVEDFGSFRIEAQRLQHQVDTLGWRITEPDTIKFLPKELESRGIRGLIIQDLIRDQEISIGGSTVYLSDVSYVRKGDSIAIIADTLPCQAAIDLAKNSCMMLCESTYLEQHRHLAESHFHMTAKQAATLAKRAATQKLILTHFSARYLNLDDFYKEASAVFPNVSVAQEYRSYPFPKNPLLNK.

The Zn(2+) site is built by His63, His65, Asp67, His68, His141, Asp208, and His266. Catalysis depends on Asp67, which acts as the Proton acceptor.

The protein belongs to the RNase Z family. As to quaternary structure, homodimer. It depends on Zn(2+) as a cofactor.

It carries out the reaction Endonucleolytic cleavage of RNA, removing extra 3' nucleotides from tRNA precursor, generating 3' termini of tRNAs. A 3'-hydroxy group is left at the tRNA terminus and a 5'-phosphoryl group is left at the trailer molecule.. Zinc phosphodiesterase, which displays some tRNA 3'-processing endonuclease activity. Probably involved in tRNA maturation, by removing a 3'-trailer from precursor tRNA. In Chlamydia pneumoniae (Chlamydophila pneumoniae), this protein is Ribonuclease Z.